A 583-amino-acid chain; its full sequence is MGEKLDKDSILYKKRHSIAHVMAEAVLELFPNTKIAIGPPIKDGFYYDFDFEKHISEDDLLLIEHKMREILKTGSPFIREVITREQALVLFKDEPYKIDLIQNFDVTDEITIYKSHKFTDLCRGPHVDNMNKLDPKAFKLTSIAGAYWRGNERNKMLSRIYGTLWNNEKDLKAYLKLQEEIKKRDHRKLGRELNLFSVHDEIGPGLIFFHPHGARIRALIENFWREEHFKNGYDILFTPHIGKSWLWETSGHLDFYKESMFEKIEMDRSDYYVKPMNCPFHIAIYNTDKHSYRDLPFRWAELGTVYRYEKIGAIHGTMRVRGFTQDDAHIICTYEQVNFEVREVLRFAIDMWNKFGFTNLKAYLSTKPEKAVGDDDDWQMAVKVLEKALIDFNIDFDIDEGGGAFYGPKIDLKIIDSLGRAWQMTTIQFDFNLPVRFKMTYTAEDGKEKRPFMIHRALLGSIERFFGILVEHYGGAFPVWLAPLQVVIIPVNSIVEEYALEVLSRFQNEGIRIKFDNYYNMRMNAKIRQYQSKKVPYMFIIGEREVVEGKISIRTRTNEQINGLELKEALEFVKLKISNKEIL.

A catalytic region spans residues 185-478 (DHRKLGRELN…LVEHYGGAFP (294 aa)). Positions 278, 329, and 455 each coordinate Zn(2+).

The protein belongs to the class-II aminoacyl-tRNA synthetase family. As to quaternary structure, homodimer. Zn(2+) serves as cofactor.

The protein localises to the cytoplasm. The catalysed reaction is tRNA(Thr) + L-threonine + ATP = L-threonyl-tRNA(Thr) + AMP + diphosphate + H(+). Functionally, catalyzes the attachment of threonine to tRNA(Thr) in a two-step reaction: L-threonine is first activated by ATP to form Thr-AMP and then transferred to the acceptor end of tRNA(Thr). Also edits incorrectly charged L-seryl-tRNA(Thr). This chain is Threonine--tRNA ligase, found in Borrelia recurrentis (strain A1).